A 126-amino-acid polypeptide reads, in one-letter code: Large ribosomal subunit protein eL18 (126 aa).

It belongs to the eukaryotic ribosomal protein eL18 family.

This chain is Large ribosomal subunit protein eL18, found in Methanosarcina mazei (strain ATCC BAA-159 / DSM 3647 / Goe1 / Go1 / JCM 11833 / OCM 88) (Methanosarcina frisia).